The following is a 420-amino-acid chain: Probable serine hydroxymethyltransferase (420 aa).

(6S)-5,6,7,8-tetrahydrofolate is bound by residues leucine 121 and 125 to 127; that span reads GHL. Position 230 is an N6-(pyridoxal phosphate)lysine (lysine 230). Residues glutamate 246 and 354–356 each bind (6S)-5,6,7,8-tetrahydrofolate; that span reads SPF.

It belongs to the SHMT family. As to quaternary structure, homodimer. Pyridoxal 5'-phosphate is required as a cofactor.

Its subcellular location is the cytoplasm. It catalyses the reaction (6R)-5,10-methylene-5,6,7,8-tetrahydrofolate + glycine + H2O = (6S)-5,6,7,8-tetrahydrofolate + L-serine. It participates in one-carbon metabolism; tetrahydrofolate interconversion. Its function is as follows. Catalyzes the reversible interconversion of serine and glycine with tetrahydrofolate (THF) serving as the one-carbon carrier. This reaction serves as the major source of one-carbon groups required for the biosynthesis of purines, thymidylate, methionine, and other important biomolecules. This is Probable serine hydroxymethyltransferase from Rickettsia bellii (strain RML369-C).